A 70-amino-acid chain; its full sequence is Brevinin-1MT1 (70 aa).

An N-terminal signal peptide occupies residues 1–22; it reads MFTLKKSLLLLFFLGTINLSLC. Residues 23–44 constitute a propeptide that is removed on maturation; it reads EQERDADEEERRDDDEMDVEVE. Cysteine 64 and cysteine 70 are oxidised to a cystine.

Belongs to the frog skin active peptide (FSAP) family. Brevinin subfamily. Expressed by the skin glands.

The protein localises to the secreted. In terms of biological role, antimicrobial peptide with activity against a variety of Gram-negative and Gram-positive bacteria and against fungi. Shows strong hemolytic activity against human erythrocytes. The polypeptide is Brevinin-1MT1 (Amolops mantzorum (Sichuan torrent frog)).